We begin with the raw amino-acid sequence, 464 residues long: Probable acid phosphatase DDB_G0284753 (464 aa).

Residues 1 to 29 (MFSYFRKSQQKVEENQNGGGGDGRGSGIK) form a disordered region. Positions 17–26 (NGGGGDGRGS) are enriched in gly residues. The active-site Nucleophile is His81. A disordered region spans residues 180–202 (SFTDEQEKSPHHSSFLVKPDNEE). The active-site Proton donor is the Asp347.

This sequence belongs to the histidine acid phosphatase family.

The enzyme catalyses a phosphate monoester + H2O = an alcohol + phosphate. In Dictyostelium discoideum (Social amoeba), this protein is Probable acid phosphatase DDB_G0284753.